The primary structure comprises 47 residues: Short neurotoxin D2A (47 aa).

2 disulfide bridges follow: C3–C24 and C17–C39.

In terms of tissue distribution, expressed by the venom gland.

It localises to the secreted. The protein is Short neurotoxin D2A of Micrurus pyrrhocryptus (Coral snake).